Here is a 237-residue protein sequence, read N- to C-terminus: Ribosomal RNA small subunit methyltransferase G (237 aa).

Residues G76, F81, 99–101 (DSS), 128–129 (IE), and R147 contribute to the S-adenosyl-L-methionine site.

This sequence belongs to the methyltransferase superfamily. RNA methyltransferase RsmG family.

The protein resides in the cytoplasm. Functionally, specifically methylates the N7 position of a guanine in 16S rRNA. The protein is Ribosomal RNA small subunit methyltransferase G of Prochlorococcus marinus (strain MIT 9312).